We begin with the raw amino-acid sequence, 737 residues long: Probable beta-glucosidase L (737 aa).

A signal peptide spans 1–19; that stretch reads MRSLIRSGALNAFLAASLA. Residue N225 is glycosylated (N-linked (GlcNAc...) asparagine). D253 is a catalytic residue. Residues N340, N365, and N608 are each glycosylated (N-linked (GlcNAc...) asparagine).

The protein belongs to the glycosyl hydrolase 3 family.

It is found in the secreted. The catalysed reaction is Hydrolysis of terminal, non-reducing beta-D-glucosyl residues with release of beta-D-glucose.. It participates in glycan metabolism; cellulose degradation. Functionally, beta-glucosidases are one of a number of cellulolytic enzymes involved in the degradation of cellulosic biomass. Catalyzes the last step releasing glucose from the inhibitory cellobiose. The protein is Probable beta-glucosidase L (bglL) of Emericella nidulans (strain FGSC A4 / ATCC 38163 / CBS 112.46 / NRRL 194 / M139) (Aspergillus nidulans).